The chain runs to 372 residues: Ephrin type-A receptor 8 (372 aa).

A Protein kinase domain is found at 2–263 (IHIEKIIGSG…HVVSVLEALV (262 aa)). Residues 8–16 (IGSGESGEV) and Lys34 contribute to the ATP site. The Proton acceptor role is filled by Asp127. Phosphotyrosine; by autocatalysis is present on Tyr206. Positions 297–372 (NGDLTVGDWL…SCTQGPRRHL (76 aa)) constitute an SAM domain. Residues 370–372 (RHL) carry the PDZ-binding motif.

As to quaternary structure, heterotetramer upon binding of the ligand. The heterotetramer is composed of an ephrin dimer and a receptor dimer. Oligomerization is probably required to induce biological responses. May also form heterodimers with other ephrin receptors. Interacts with FYN; possible downstream effector of EPHA8 in regulation of cell adhesion. Interacts with PIK3CG; regulates integrin-mediated cell adhesion to substrate. Interacts with TIAM1; regulates clathrin-mediated endocytosis of EPHA8. Interacts with ANKS1A and ANKS1B; EPHA8 kinase activity-independent but stimulated by EPHA8 ubiquitination. Post-translationally, phosphorylated. Phosphorylation is stimulated upon binding of its ligands including EFNA2, EFNA3 and EFNA5. Autophosphorylation on Tyr-206 modulates tyrosine kinase activity. Ubiquitinated. Ubiquitination by CBL regulates the receptor stability and activity through proteasomal degradation. ANKS1A prevents ubiquitination and degradation. In terms of tissue distribution, most abundant in brain.

It localises to the cell membrane. The protein localises to the cell projection. The protein resides in the early endosome membrane. It carries out the reaction L-tyrosyl-[protein] + ATP = O-phospho-L-tyrosyl-[protein] + ADP + H(+). Functionally, receptor tyrosine kinase which binds promiscuously GPI-anchored ephrin-A family ligands residing on adjacent cells, leading to contact-dependent bidirectional signaling into neighboring cells. The signaling pathway downstream of the receptor is referred to as forward signaling while the signaling pathway downstream of the ephrin ligand is referred to as reverse signaling. The GPI-anchored ephrin-A EFNA2, EFNA3, and EFNA5 are able to activate EPHA8 through phosphorylation. With EFNA5 may regulate integrin-mediated cell adhesion and migration on fibronectin substrate but also neurite outgrowth. During development of the nervous system also plays a role in axon guidance. Downstream effectors of the EPHA8 signaling pathway include FYN which promotes cell adhesion upon activation by EPHA8 and the MAP kinases in the stimulation of neurite outgrowth. This chain is Ephrin type-A receptor 8 (Epha8), found in Rattus norvegicus (Rat).